The sequence spans 243 residues: Ubiquinone/menaquinone biosynthesis C-methyltransferase UbiE (243 aa).

Residues threonine 69, aspartate 90, and 116–117 each bind S-adenosyl-L-methionine; that span reads DA.

It belongs to the class I-like SAM-binding methyltransferase superfamily. MenG/UbiE family.

It catalyses the reaction a 2-demethylmenaquinol + S-adenosyl-L-methionine = a menaquinol + S-adenosyl-L-homocysteine + H(+). The enzyme catalyses a 2-methoxy-6-(all-trans-polyprenyl)benzene-1,4-diol + S-adenosyl-L-methionine = a 5-methoxy-2-methyl-3-(all-trans-polyprenyl)benzene-1,4-diol + S-adenosyl-L-homocysteine + H(+). It participates in quinol/quinone metabolism; menaquinone biosynthesis; menaquinol from 1,4-dihydroxy-2-naphthoate: step 2/2. It functions in the pathway cofactor biosynthesis; ubiquinone biosynthesis. Its function is as follows. Methyltransferase required for the conversion of demethylmenaquinol (DMKH2) to menaquinol (MKH2) and the conversion of 2-polyprenyl-6-methoxy-1,4-benzoquinol (DDMQH2) to 2-polyprenyl-3-methyl-6-methoxy-1,4-benzoquinol (DMQH2). This is Ubiquinone/menaquinone biosynthesis C-methyltransferase UbiE from Cupriavidus pinatubonensis (strain JMP 134 / LMG 1197) (Cupriavidus necator (strain JMP 134)).